A 184-amino-acid chain; its full sequence is Adenine phosphoribosyltransferase (184 aa).

Belongs to the purine/pyrimidine phosphoribosyltransferase family. As to quaternary structure, homodimer.

Its subcellular location is the cytoplasm. It carries out the reaction AMP + diphosphate = 5-phospho-alpha-D-ribose 1-diphosphate + adenine. It functions in the pathway purine metabolism; AMP biosynthesis via salvage pathway; AMP from adenine: step 1/1. Its function is as follows. Catalyzes a salvage reaction resulting in the formation of AMP, that is energically less costly than de novo synthesis. This Shewanella putrefaciens (strain CN-32 / ATCC BAA-453) protein is Adenine phosphoribosyltransferase.